The chain runs to 316 residues: Zinc finger protein 367 (316 aa).

Residues 61 to 97 (VTLGPGSGSGAASPTRTSSSPAEADPLSCPEHLKDGI) are disordered. Low complexity predominate over residues 70–82 (GAASPTRTSSSPA). 2 consecutive C2H2-type zinc fingers follow at residues 121–143 (IRCNICNRVFPREKSLQAHKRTH) and 149–173 (YLCDYPDCGKAFVQSGQLKTHQRLH). The disordered stretch occupies residues 234-294 (QTREQRSPVP…GGVVTARRRL (61 aa)). The span at 255–278 (EDQEQQDPLDFLPSDEGEEEEQEE) shows a compositional bias: acidic residues. Residues 289–313 (TARRRLQEQRERLHGALALIELANN) are a coiled coil.

Belongs to the krueppel C2H2-type zinc-finger protein family.

Its subcellular location is the nucleus. Functionally, transcriptional activator. This is Zinc finger protein 367 (znf367) from Danio rerio (Zebrafish).